The following is a 127-amino-acid chain: MSIPNNLRYSEEHEWVKTEGNEVVIGITHFAQSELGDIVFVELPEVGATIEADEPFGSVESVKTVSELYAPVSGKVVAVNEELSDQPELVNESPYEGAWMVKVELSDASQVEKLLTAEKYAEMTNQD.

Residues 22–104 (EVVIGITHFA…YEGAWMVKVE (83 aa)) enclose the Lipoyl-binding domain. Lys-63 is subject to N6-lipoyllysine.

Belongs to the GcvH family. The glycine cleavage system is composed of four proteins: P, T, L and H. It depends on (R)-lipoate as a cofactor.

Its function is as follows. The glycine cleavage system catalyzes the degradation of glycine. The H protein shuttles the methylamine group of glycine from the P protein to the T protein. Functionally, is also involved in protein lipoylation via its role as an octanoyl/lipoyl carrier protein intermediate. The polypeptide is Glycine cleavage system H protein (Bacillus cereus (strain ATCC 10987 / NRS 248)).